The following is a 120-amino-acid chain: Nitrogenase-stabilizing/protective protein NifW (120 aa).

It belongs to the NifW family. As to quaternary structure, homotrimer; associates with NifD.

May protect the nitrogenase Fe-Mo protein from oxidative damage. This is Nitrogenase-stabilizing/protective protein NifW from Rhodospirillum rubrum (strain ATCC 11170 / ATH 1.1.1 / DSM 467 / LMG 4362 / NCIMB 8255 / S1).